The following is a 231-amino-acid chain: Axial regulator YABBY 4 (231 aa).

The C4-type zinc-finger motif lies at 26–53; sequence CGFCTTILLVSVPFTSLSMVVTVRCGHC. Disordered stretches follow at residues 98–120 and 211–231; these read KVNQ…EDED and NNGF…SPFE.

The protein belongs to the YABBY family. As to quaternary structure, interacts with SPL/NZZ.

It is found in the nucleus. Its function is as follows. Essential for the formation and the abaxial-adaxial asymmetric growth of the ovule outer integument. The chain is Axial regulator YABBY 4 (YAB4) from Arabidopsis thaliana (Mouse-ear cress).